The sequence spans 250 residues: MGAAASIQTTVNTLSERISSKLEQEANASAQTKCDIEIGNFYIRQNHGCNLTVKNMCSADADAQLDAVLSAATETYSGLTPEQKAYVPAMFTAALNIQTSVNTVVRDFENYVKQTCNSSAVVDNKLKIQNVIIDECYGAPGSPTNLEFINTGSSKGNCAIKALMQLTTKATTQIAPRQVAGTGVQFYMIVIGVIILAALFMYYAKRMLFTSTNDKIKLILANKENVHWTTYMDTFFRTSPMVIATTDMQN.

A lipid anchor (N-myristoyl glycine; by host) is attached at Gly-2. Positions 2–12 are targeting to MV membrane; that stretch reads GAAASIQTTVN. Over 2-183 the chain is Virion surface; sequence GAAASIQTTV…IAPRQVAGTG (182 aa). Intrachain disulfides connect Cys-34–Cys-57, Cys-49–Cys-136, and Cys-116–Cys-158. Residues 184-204 traverse the membrane as a helical segment; that stretch reads VQFYMIVIGVIILAALFMYYA. Residues 205-250 lie on the Intravirion side of the membrane; that stretch reads KRMLFTSTNDKIKLILANKENVHWTTYMDTFFRTSPMVIATTDMQN.

The protein belongs to the orthopoxvirus OPG095 family. Component of the entry fusion complex (EFC) composed of OPG053, OPG076, OPG086, OPG094, OPG095, OPG099, OPG107, OPG143, OPG104, OPG147 and OPG155. Except for OPG095 and OPG053, each of the EFC proteins is required for assembly or stability of the complex. Myristoylated. Post-translationally, disulfid bonds are oxidized in the cytoplasm by OPG088 protein. In terms of processing, unglycosylated because produced in viral factories instead of the classic ER -Golgi route.

The protein localises to the virion membrane. In terms of biological role, component of the entry fusion complex (EFC), which consists of 11 proteins. During cell infection, this complex mediates entry of the virion core into the host cytoplasm by a two-step mechanism consisting of lipid mixing of the viral and cellular membranes and subsequent pore formation. The polypeptide is Entry-fusion complex associated protein OPG095 (OPG099) (Homo sapiens (Human)).